Consider the following 579-residue polypeptide: Potassium-transporting ATPase potassium-binding subunit (579 aa).

Helical transmembrane passes span 2-22, 66-86, 135-155, 177-197, 262-282, 292-312, 391-411, 437-457, 490-510, and 546-566; these read MNLV…AIPL, SFSV…IHIF, GLTV…FALI, VLYI…SQGV, LSNL…CFTF, GIAI…IIGV, VFGG…LAVF, VLVC…ASIL, FAGF…SMLF, and FIGL…FPAL.

The protein belongs to the KdpA family. The system is composed of three essential subunits: KdpA, KdpB and KdpC.

Its subcellular location is the cell membrane. Part of the high-affinity ATP-driven potassium transport (or Kdp) system, which catalyzes the hydrolysis of ATP coupled with the electrogenic transport of potassium into the cytoplasm. This subunit binds the extracellular potassium ions and delivers the ions to the membrane domain of KdpB through an intramembrane tunnel. The chain is Potassium-transporting ATPase potassium-binding subunit from Clostridium botulinum (strain Alaska E43 / Type E3).